An 807-amino-acid chain; its full sequence is Phenylalanine--tRNA ligase beta subunit (807 aa).

Residues 39 to 153 enclose the tRNA-binding domain; it reads SARAQGVVVG…SLPPNGSPVA (115 aa). Residues 407–491 form the B5 domain; sequence AEAGPVLLRR…RLVGFDRFGA (85 aa). Mg(2+) is bound by residues aspartate 469, aspartate 475, glutamate 478, and glutamate 479. The region spanning 713-806 is the FDX-ACB domain; it reads PTVPFSERDL…LSKQFQAELR (94 aa).

It belongs to the phenylalanyl-tRNA synthetase beta subunit family. Type 1 subfamily. In terms of assembly, tetramer of two alpha and two beta subunits. Requires Mg(2+) as cofactor.

Its subcellular location is the cytoplasm. It catalyses the reaction tRNA(Phe) + L-phenylalanine + ATP = L-phenylalanyl-tRNA(Phe) + AMP + diphosphate + H(+). This is Phenylalanine--tRNA ligase beta subunit from Synechococcus sp. (strain CC9605).